Here is a 465-residue protein sequence, read N- to C-terminus: Ribulose bisphosphate carboxylase large chain (465 aa).

An N6,N6,N6-trimethyllysine modification is found at Lys-4. Residues Asn-113 and Thr-163 each contribute to the substrate site. Lys-165 (proton acceptor) is an active-site residue. Residue Lys-167 coordinates substrate. Mg(2+)-binding residues include Lys-191, Asp-193, and Glu-194. At Lys-191 the chain carries N6-carboxylysine. His-284 functions as the Proton acceptor in the catalytic mechanism. Positions 285, 317, and 369 each coordinate substrate.

Belongs to the RuBisCO large chain family. Type I subfamily. As to quaternary structure, heterohexadecamer of 8 large chains and 8 small chains; disulfide-linked. The disulfide link is formed within the large subunit homodimers. Requires Mg(2+) as cofactor. Post-translationally, the disulfide bond which can form in the large chain dimeric partners within the hexadecamer appears to be associated with oxidative stress and protein turnover.

It is found in the plastid. It localises to the chloroplast. It catalyses the reaction 2 (2R)-3-phosphoglycerate + 2 H(+) = D-ribulose 1,5-bisphosphate + CO2 + H2O. The catalysed reaction is D-ribulose 1,5-bisphosphate + O2 = 2-phosphoglycolate + (2R)-3-phosphoglycerate + 2 H(+). In terms of biological role, ruBisCO catalyzes two reactions: the carboxylation of D-ribulose 1,5-bisphosphate, the primary event in carbon dioxide fixation, as well as the oxidative fragmentation of the pentose substrate in the photorespiration process. Both reactions occur simultaneously and in competition at the same active site. In Morella cerifera (Wax myrtle), this protein is Ribulose bisphosphate carboxylase large chain.